A 266-amino-acid polypeptide reads, in one-letter code: Cytochrome c oxidase subunit 2 (266 aa).

The Mitochondrial intermembrane segment spans residues 1–43 (MTITNYINNQFTFLDMAEPWQLGFQDPATPVMEGIINFHHDLM). A helical transmembrane segment spans residues 44–64 (FFLISIVVFVCWMLFRVITLF). Over 65-82 (DEKKNKIPATVVHGATIE) the chain is Mitochondrial matrix. The chain crosses the membrane as a helical span at residues 83-103 (IIWTSIPALILLTVAVPSFAL). Over 104 to 266 (LYSMDEVIDP…NVXLIKFYGI (163 aa)) the chain is Mitochondrial intermembrane. Cu cation contacts are provided by histidine 186, cysteine 221, glutamate 223, cysteine 225, histidine 229, and methionine 232. A Mg(2+)-binding site is contributed by glutamate 223.

The protein belongs to the cytochrome c oxidase subunit 2 family. As to quaternary structure, component of the cytochrome c oxidase (complex IV, CIV), a multisubunit enzyme composed of a catalytic core of 3 subunits and several supernumerary subunits. The complex exists as a monomer or a dimer and forms supercomplexes (SCs) in the inner mitochondrial membrane with ubiquinol-cytochrome c oxidoreductase (cytochrome b-c1 complex, complex III, CIII). Cu cation is required as a cofactor.

It localises to the mitochondrion inner membrane. It catalyses the reaction 4 Fe(II)-[cytochrome c] + O2 + 8 H(+)(in) = 4 Fe(III)-[cytochrome c] + 2 H2O + 4 H(+)(out). Component of the cytochrome c oxidase, the last enzyme in the mitochondrial electron transport chain which drives oxidative phosphorylation. The respiratory chain contains 3 multisubunit complexes succinate dehydrogenase (complex II, CII), ubiquinol-cytochrome c oxidoreductase (cytochrome b-c1 complex, complex III, CIII) and cytochrome c oxidase (complex IV, CIV), that cooperate to transfer electrons derived from NADH and succinate to molecular oxygen, creating an electrochemical gradient over the inner membrane that drives transmembrane transport and the ATP synthase. Cytochrome c oxidase is the component of the respiratory chain that catalyzes the reduction of oxygen to water. Electrons originating from reduced cytochrome c in the intermembrane space (IMS) are transferred via the dinuclear copper A center (CU(A)) of subunit 2 and heme A of subunit 1 to the active site in subunit 1, a binuclear center (BNC) formed by heme A3 and copper B (CU(B)). The BNC reduces molecular oxygen to 2 water molecules using 4 electrons from cytochrome c in the IMS and 4 protons from the mitochondrial matrix. This chain is Cytochrome c oxidase subunit 2 (COX2), found in Phytophthora megasperma (Potato pink rot fungus).